The following is a 180-amino-acid chain: Oligoribonuclease (180 aa).

Residues 7–170 form the Exonuclease domain; it reads LIWIDLEMTG…DDIRESIAEL (164 aa). Y128 is a catalytic residue.

The protein belongs to the oligoribonuclease family.

Its subcellular location is the cytoplasm. Functionally, 3'-to-5' exoribonuclease specific for small oligoribonucleotides. This chain is Oligoribonuclease, found in Pseudomonas paraeruginosa (strain DSM 24068 / PA7) (Pseudomonas aeruginosa (strain PA7)).